The primary structure comprises 260 residues: Homeobox-leucine zipper protein HOX25 (260 aa).

A compositionally biased stretch (acidic residues) spans 1–10; it reads MEDLVDELYG. Disordered stretches follow at residues 1 to 24, 121 to 145, and 190 to 221; these read MEDL…ARKR, ANGK…PESA, and SPES…YPSS. Positions 19–79 form a DNA-binding region, homeobox; it reads AAARKRRLTA…NRRARWKTKQ (61 aa). Residues 78-122 form a leucine-zipper region; the sequence is KQLELDFDRLRAAHDELLAGRAALAADNESLRSQVILLTEKLQAN. Residues 205–218 are compositionally biased toward acidic residues; the sequence is SEDDCGGAGSDDDY.

This sequence belongs to the HD-ZIP homeobox family. Class I subfamily. In terms of tissue distribution, expressed in roots, leaf sheaths and blades and panicles.

The protein localises to the nucleus. Its function is as follows. Probable transcription factor. The sequence is that of Homeobox-leucine zipper protein HOX25 (HOX25) from Oryza sativa subsp. indica (Rice).